Here is a 158-residue protein sequence, read N- to C-terminus: MQGRLSAWLVKHGLVHRSLGFDYQGIETLQIKPEDWHSIAVILYVYGYNYLRSQCAYDVAPGGLLASVYHLTRIEYGVDQPEEVCIKVFAPRRNPRIPSVFWIWKSADFQERESYDMLGICYDTHPRLKRILMPETWIGWPLRKDYIAPNFYEIQDAH.

The protein belongs to the complex I 30 kDa subunit family. In terms of assembly, NDH is composed of at least 16 different subunits, 5 of which are encoded in the nucleus.

Its subcellular location is the plastid. The protein localises to the chloroplast thylakoid membrane. The catalysed reaction is a plastoquinone + NADH + (n+1) H(+)(in) = a plastoquinol + NAD(+) + n H(+)(out). It catalyses the reaction a plastoquinone + NADPH + (n+1) H(+)(in) = a plastoquinol + NADP(+) + n H(+)(out). Functionally, NDH shuttles electrons from NAD(P)H:plastoquinone, via FMN and iron-sulfur (Fe-S) centers, to quinones in the photosynthetic chain and possibly in a chloroplast respiratory chain. The immediate electron acceptor for the enzyme in this species is believed to be plastoquinone. Couples the redox reaction to proton translocation, and thus conserves the redox energy in a proton gradient. The chain is NAD(P)H-quinone oxidoreductase subunit J, chloroplastic from Eucalyptus globulus subsp. globulus (Tasmanian blue gum).